Reading from the N-terminus, the 405-residue chain is Argininosuccinate synthase (405 aa).

Residues 10–18 and A37 contribute to the ATP site; that span reads AYSGGLDTS. Positions 88 and 93 each coordinate L-citrulline. G118 is an ATP binding site. Positions 120, 124, and 125 each coordinate L-aspartate. N124 contributes to the L-citrulline binding site. L-citrulline contacts are provided by R128, S179, S188, E264, and Y276.

The protein belongs to the argininosuccinate synthase family. Type 1 subfamily. Homotetramer.

The protein localises to the cytoplasm. It catalyses the reaction L-citrulline + L-aspartate + ATP = 2-(N(omega)-L-arginino)succinate + AMP + diphosphate + H(+). It functions in the pathway amino-acid biosynthesis; L-arginine biosynthesis; L-arginine from L-ornithine and carbamoyl phosphate: step 2/3. The chain is Argininosuccinate synthase from Pseudomonas aeruginosa (strain LESB58).